The following is a 437-amino-acid chain: Doublesex- and mab-3-related transcription factor A2 (437 aa).

The segment at residues Cys49–Arg96 is a DNA-binding region (DM). Positions Ile160–Gln253 are disordered. Composition is skewed to low complexity over residues Ser179–Glu201 and Ser223–Gly235. The DMA domain maps to Arg254–Gln289.

Belongs to the DMRT family.

It localises to the nucleus. Its function is as follows. May be involved in sexual development. The polypeptide is Doublesex- and mab-3-related transcription factor A2 (dmrta2) (Xenopus laevis (African clawed frog)).